The following is a 189-amino-acid chain: Phomopsin biosynthesis cluster protein C' (189 aa).

Belongs to the oryJ family.

In terms of biological role, part of the gene cluster that mediates the biosynthesis of the phomopsins, a group of hexapeptide mycotoxins which infects lupins and causes lupinosis disease in livestock. The role of phomC' within the phomopsins biosynthesis pathway has still to be determined. The pathway starts with the processing of the precursor phomA by several endopeptidases including kexin proteases as well as the cluster-specific S41 family peptidase phomP1 and the oligopeptidase phomG to produce 10 identical copies of the hexapeptide Tyr-Val-Ile-Pro-Ile-Asp. After being excised from the precursor peptide, the core peptides are cyclized and modified post-translationally by enzymes encoded within the gene cluster. The timing and order of proteolysis of the phomA precursor and PTMs are still unknown. Two tyrosinase-like enzymes, phomQ1 and phomQ2, catalyze the chlorination and hydroxylation of Tyr, respectively. PhomYb, is proposed to be involved in the construction of the macrocyclic structure. The other 4 ustYa family proteins may be involved in PTMs that generate the unique structure of phomopsin A. PhomYa is required for the hydroxylation of C-beta of Tyr. PhomYc, phomYd, and phomYe are responsible for the biosynthesis of 2,3-dehydroisoleucine (dIle), 2,3-dehydroaspartic acid (dAsp), and 3,4-dehydroproline (dPro), respectively. While dIle formation by phomYc is indispensable for the installation of dAsp by phomYd, the order of the other PTMs have not been elucidated yet. Most of the biosynthetic enzymes likely have broad substrate specificity, and thus, there might be a metabolic grid from a precursor to phomopsin A. The enzyme(s) responsible for the biosynthesis of 3,4-dehydrovaline (dVal) have also not been identified yet. Finally, phomM acts as an S-adenosylmethionine-dependent alpha-N-methyltransferase that catalyzes two successive N-methylation reactions, converting N-desmethyl-phomopsin A to phomopsin A and phomopsin A further to an N,N-dimethylated congener called phomopsin E. The protein is Phomopsin biosynthesis cluster protein C' of Diaporthe leptostromiformis (Lupinosis disease fungus).